Here is a 351-residue protein sequence, read N- to C-terminus: Heat-inducible transcription repressor HrcA (351 aa).

This sequence belongs to the HrcA family.

In terms of biological role, negative regulator of class I heat shock genes (grpE-dnaK-dnaJ and groELS operons). Prevents heat-shock induction of these operons. In Fusobacterium nucleatum subsp. nucleatum (strain ATCC 25586 / DSM 15643 / BCRC 10681 / CIP 101130 / JCM 8532 / KCTC 2640 / LMG 13131 / VPI 4355), this protein is Heat-inducible transcription repressor HrcA.